The following is a 257-amino-acid chain: NAD-capped RNA hydrolase NudC (257 aa).

Residues lysine 25 and arginine 69 each coordinate substrate. Cysteine 98 and cysteine 101 together coordinate Zn(2+). Glutamate 111 lines the substrate pocket. Residues cysteine 116 and cysteine 119 each contribute to the Zn(2+) site. Substrate is bound at residue tyrosine 124. In terms of domain architecture, Nudix hydrolase spans 125–248 (PQIAPCIIVA…TVARRLIEDT (124 aa)). The a divalent metal cation site is built by alanine 158, glutamate 174, and glutamate 178. The short motif at 159-180 (GFVEVGETLEQAVAREVMEESG) is the Nudix box element. Position 192 to 199 (192 to 199 (QPWPFPQS)) interacts with substrate. Position 219 (glutamate 219) interacts with a divalent metal cation. Residue alanine 241 participates in substrate binding.

The protein belongs to the Nudix hydrolase family. NudC subfamily. As to quaternary structure, homodimer. The cofactor is Mg(2+). It depends on Mn(2+) as a cofactor. Requires Zn(2+) as cofactor.

It catalyses the reaction a 5'-end NAD(+)-phospho-ribonucleoside in mRNA + H2O = a 5'-end phospho-adenosine-phospho-ribonucleoside in mRNA + beta-nicotinamide D-ribonucleotide + 2 H(+). The catalysed reaction is NAD(+) + H2O = beta-nicotinamide D-ribonucleotide + AMP + 2 H(+). The enzyme catalyses NADH + H2O = reduced beta-nicotinamide D-ribonucleotide + AMP + 2 H(+). In terms of biological role, mRNA decapping enzyme that specifically removes the nicotinamide adenine dinucleotide (NAD) cap from a subset of mRNAs by hydrolyzing the diphosphate linkage to produce nicotinamide mononucleotide (NMN) and 5' monophosphate mRNA. The NAD-cap is present at the 5'-end of some mRNAs and stabilizes RNA against 5'-processing. Has preference for mRNAs with a 5'-end purine. Catalyzes the hydrolysis of a broad range of dinucleotide pyrophosphates. The chain is NAD-capped RNA hydrolase NudC from Escherichia fergusonii (strain ATCC 35469 / DSM 13698 / CCUG 18766 / IAM 14443 / JCM 21226 / LMG 7866 / NBRC 102419 / NCTC 12128 / CDC 0568-73).